Here is a 311-residue protein sequence, read N- to C-terminus: UPF0324 membrane protein VV1_3166 (311 aa).

Transmembrane regions (helical) follow at residues 8 to 28 (FIFALLLCLSPWVSSPTALVL), 51 to 71 (LLSYSIIGLGFGIQFQQAIAV), 74 to 94 (DGIGLIVVTIAGTLLLGFLVA), 106 to 126 (LISAGTAICGGSAIAAVAPAI), 133 to 153 (IALALATVFVLNSLALFIFPV), 165 to 185 (FGTWAAIAIHDTSSVVGAASA), 197 to 217 (LKLARALWIIPVALLSAILFA), 228 to 248 (LVLPYFIFWYCAAIAFSDLFP), 256 to 276 (GIFSVAKQALVVCLFLIGCSI), and 289 to 309 (LIFGLSLWVVISTTSLSWLLL).

It belongs to the UPF0324 family.

The protein localises to the cell membrane. This is UPF0324 membrane protein VV1_3166 from Vibrio vulnificus (strain CMCP6).